Reading from the N-terminus, the 59-residue chain is Large ribosomal subunit protein uL30 (59 aa).

The protein belongs to the universal ribosomal protein uL30 family. In terms of assembly, part of the 50S ribosomal subunit.

The chain is Large ribosomal subunit protein uL30 from Buchnera aphidicola subsp. Acyrthosiphon pisum (strain 5A).